We begin with the raw amino-acid sequence, 1235 residues long: N-acetylglucosamine-1-phosphotransferase subunits alpha/beta (1235 aa).

Residues 22–42 form a helical membrane-spanning segment; the sequence is VCFVGVVVTIVSAFQFGEVVL. N83, N114, N148, and N179 each carry an N-linked (GlcNAc...) asparagine glycan. Disulfide bonds link C438-C461, C452-C468, C505-C528, and C519-C535. LNR repeat units lie at residues 438–473 and 505–545; these read CAEG…GNTA and CNQG…ELYK. D449, D464, D467, D516, D531, and D534 together coordinate Ca(2+). 2 N-linked (GlcNAc...) asparagine glycosylation sites follow: N614 and N729. The DMAP1-binding domain occupies 699–823; that stretch reads NISLLPKEAQ…AQPTLGVTVS (125 aa). 2 disordered regions span residues 751-783 and 830-850; these read QART…HRSE and LIVP…AEGN. Basic and acidic residues predominate over residues 837–848; the sequence is HLPKEEESDRAE. The 36-residue stretch at 984–1019 folds into the EF-hand domain; the sequence is VQPLNISQVFHEVDTDQSGVLSDREIRTLATRIHDL. N988 carries an N-linked (GlcNAc...) asparagine glycan. Positions 997, 999, 1001, and 1008 each coordinate Ca(2+). A glycan (N-linked (GlcNAc...) asparagine) is linked at N1108. The helical transmembrane segment at 1194 to 1214 threads the bilayer; it reads VLATLIIFTIFSFFAEQIIAL.

The protein belongs to the stealth family. As to quaternary structure, hexamer of two alpha, two beta and two gamma (GNPTG) subunits; disulfide-linked. The alpha and/or the beta subunits of the enzyme constitute the catalytic subunits. Interacts with LYSET; facilitates proper localization of GNPTAB. In terms of processing, the alpha- and beta-subunits are generated by a proteolytic cleavage by MBTPS1 protease at the Lys-907-Asp-908 bond.

Its subcellular location is the golgi apparatus membrane. It catalyses the reaction N(4)-[alpha-D-mannosyl-(1-&gt;2)-alpha-D-mannosyl-(glycan)]-L-asparaginyl-[protein] + UDP-N-acetyl-alpha-D-glucosamine = N(4)-[6-(N-acetyl-alpha-D-glucosaminyl-1-phospho)-alpha-D-mannosyl-(1-&gt;2)-alpha-D-mannosyl-(glycan)]-L-asparaginyl-[protein] + UMP + H(+). In terms of biological role, catalyzes the formation of mannose 6-phosphate (M6P) markers on high mannose type oligosaccharides in the Golgi apparatus. M6P residues are required to bind to the M6P receptors (MPR), which mediate the vesicular transport of lysosomal enzymes to the endosomal/prelysosomal compartment. The sequence is that of N-acetylglucosamine-1-phosphotransferase subunits alpha/beta (Gnptab) from Mus musculus (Mouse).